The chain runs to 267 residues: 2-keto-3-deoxy-L-rhamnonate aldolase (267 aa).

The active-site Proton acceptor is the His49. Gln151 contacts substrate. Mg(2+) is bound at residue Glu153. Residues Ala178 and Asp179 each coordinate substrate. Mg(2+) is bound at residue Asp179.

Belongs to the HpcH/HpaI aldolase family. KDR aldolase subfamily. In terms of assembly, homohexamer. Mg(2+) is required as a cofactor.

It carries out the reaction 2-dehydro-3-deoxy-L-rhamnonate = (S)-lactaldehyde + pyruvate. In terms of biological role, catalyzes the reversible retro-aldol cleavage of 2-keto-3-deoxy-L-rhamnonate (KDR) to pyruvate and lactaldehyde. In Shigella boydii serotype 4 (strain Sb227), this protein is 2-keto-3-deoxy-L-rhamnonate aldolase.